The sequence spans 198 residues: Synaptobrevin homolog YKT6-B (198 aa).

Residues 8 to 127 (VLYKGENKVH…IQYNALDSYL (120 aa)) enclose the Longin domain. Positions 138 to 198 (PMSKVQAELD…RKQNSCCDIM (61 aa)) constitute a v-SNARE coiled-coil homology domain. A lipid anchor (S-palmitoyl cysteine) is attached at cysteine 194. Cysteine 195 carries the post-translational modification Cysteine methyl ester. Residue cysteine 195 is the site of S-farnesyl cysteine attachment. Residues 196-198 (DIM) constitute a propeptide, removed in mature form.

The protein belongs to the synaptobrevin family. In terms of processing, palmitoylated; catalyzes its own palmitoylation. Palmitoylation is required for Golgi targeting. Post-translationally, farnesylation is required for Golgi targeting.

It localises to the cytoplasm. It is found in the cytosol. The protein resides in the cytoplasmic vesicle membrane. The protein localises to the golgi apparatus membrane. Its function is as follows. Vesicular soluble NSF attachment protein receptor (v-SNARE) mediating vesicle docking and fusion to a specific acceptor cellular compartment. Functions in endoplasmic reticulum to Golgi transport; as part of a SNARE complex composed of GOSR1, GOSR2 and STX5. Functions in early/recycling endosome to TGN transport; as part of a SNARE complex composed of BET1L, GOSR1 and STX5. Has a S-palmitoyl transferase activity. The polypeptide is Synaptobrevin homolog YKT6-B (ykt6-b) (Xenopus laevis (African clawed frog)).